A 460-amino-acid polypeptide reads, in one-letter code: 3-isopropylmalate dehydratase large subunit (460 aa).

The [4Fe-4S] cluster site is built by cysteine 338, cysteine 398, and cysteine 401.

This sequence belongs to the aconitase/IPM isomerase family. LeuC type 1 subfamily. As to quaternary structure, heterodimer of LeuC and LeuD. The cofactor is [4Fe-4S] cluster.

The enzyme catalyses (2R,3S)-3-isopropylmalate = (2S)-2-isopropylmalate. It functions in the pathway amino-acid biosynthesis; L-leucine biosynthesis; L-leucine from 3-methyl-2-oxobutanoate: step 2/4. In terms of biological role, catalyzes the isomerization between 2-isopropylmalate and 3-isopropylmalate, via the formation of 2-isopropylmaleate. This Streptococcus thermophilus (strain CNRZ 1066) protein is 3-isopropylmalate dehydratase large subunit.